Reading from the N-terminus, the 129-residue chain is NADH-quinone oxidoreductase subunit A (129 aa).

3 helical membrane-spanning segments follow: residues 14-34 (LAIH…VAAV), 67-87 (FLIA…FAWA), and 97-117 (GLIE…YLWI).

This sequence belongs to the complex I subunit 3 family. In terms of assembly, NDH-1 is composed of 14 different subunits. Subunits NuoA, H, J, K, L, M, N constitute the membrane sector of the complex.

It localises to the cell inner membrane. The enzyme catalyses a quinone + NADH + 5 H(+)(in) = a quinol + NAD(+) + 4 H(+)(out). Its function is as follows. NDH-1 shuttles electrons from NADH, via FMN and iron-sulfur (Fe-S) centers, to quinones in the respiratory chain. The immediate electron acceptor for the enzyme in this species is believed to be ubiquinone. Couples the redox reaction to proton translocation (for every two electrons transferred, four hydrogen ions are translocated across the cytoplasmic membrane), and thus conserves the redox energy in a proton gradient. The sequence is that of NADH-quinone oxidoreductase subunit A from Rhodopseudomonas palustris (strain BisB18).